Reading from the N-terminus, the 917-residue chain is Isoleucine--tRNA ligase (917 aa).

Residues 59–69 (PYANGHIHIGH) carry the 'HIGH' region motif. Glu-569 contributes to the L-isoleucyl-5'-AMP binding site. The 'KMSKS' region motif lies at 610 to 614 (KMSKS). Lys-613 provides a ligand contact to ATP. Residues Cys-890, Cys-893, Cys-905, and Cys-908 each contribute to the Zn(2+) site.

It belongs to the class-I aminoacyl-tRNA synthetase family. IleS type 1 subfamily. In terms of assembly, monomer. It depends on Zn(2+) as a cofactor.

The protein localises to the cytoplasm. The catalysed reaction is tRNA(Ile) + L-isoleucine + ATP = L-isoleucyl-tRNA(Ile) + AMP + diphosphate. Functionally, catalyzes the attachment of isoleucine to tRNA(Ile). As IleRS can inadvertently accommodate and process structurally similar amino acids such as valine, to avoid such errors it has two additional distinct tRNA(Ile)-dependent editing activities. One activity is designated as 'pretransfer' editing and involves the hydrolysis of activated Val-AMP. The other activity is designated 'posttransfer' editing and involves deacylation of mischarged Val-tRNA(Ile). The sequence is that of Isoleucine--tRNA ligase from Campylobacter jejuni subsp. jejuni serotype O:2 (strain ATCC 700819 / NCTC 11168).